Here is a 1237-residue protein sequence, read N- to C-terminus: Putative structural protein VP3 (1237 aa).

Residues 963 to 1178 (GFLDKRVGDA…WDVSTAARMQ (216 aa)) form the PPPDE domain. Active-site residues include histidine 1001 and cysteine 1149.

Its subcellular location is the virion. The chain is Putative structural protein VP3 (S3) from Lymantria dispar cypovirus 1 (isolate Rao) (LdCPV-1).